The following is a 358-amino-acid chain: Protein-glutamate methylesterase/protein-glutamine glutaminase 1 (358 aa).

In terms of domain architecture, Response regulatory spans Arg-8–Glu-125. Position 59 is a 4-aspartylphosphate (Asp-59). The 188-residue stretch at Phe-165–Ala-352 folds into the CheB-type methylesterase domain. Residues Ser-177, His-203, and Asp-299 contribute to the active site.

The protein belongs to the CheB family. Post-translationally, phosphorylated by CheA. Phosphorylation of the N-terminal regulatory domain activates the methylesterase activity.

Its subcellular location is the cytoplasm. It carries out the reaction [protein]-L-glutamate 5-O-methyl ester + H2O = L-glutamyl-[protein] + methanol + H(+). The enzyme catalyses L-glutaminyl-[protein] + H2O = L-glutamyl-[protein] + NH4(+). Its function is as follows. Involved in chemotaxis. Part of a chemotaxis signal transduction system that modulates chemotaxis in response to various stimuli. Catalyzes the demethylation of specific methylglutamate residues introduced into the chemoreceptors (methyl-accepting chemotaxis proteins or MCP) by CheR. Also mediates the irreversible deamidation of specific glutamine residues to glutamic acid. The polypeptide is Protein-glutamate methylesterase/protein-glutamine glutaminase 1 (Xanthomonas axonopodis pv. citri (strain 306)).